Here is a 501-residue protein sequence, read N- to C-terminus: Zinc finger and SCAN domain-containing protein 12 (501 aa).

Residues K20 and K26 each participate in a glycyl lysine isopeptide (Lys-Gly) (interchain with G-Cter in SUMO2) cross-link. The SCAN box domain occupies 51 to 132 (QFCYQETSGP…DLERELDELG (82 aa)). The disordered stretch occupies residues 175–194 (REAQEEQVSGVETGNEPRNV). Residues 180 to 194 (EQVSGVETGNEPRNV) are compositionally biased toward polar residues. A Glycyl lysine isopeptide (Lys-Gly) (interchain with G-Cter in SUMO2) cross-link involves residue K197. A disordered region spans residues 223 to 255 (EAHNPGEESSGISHEDSQPLRNENGVNSPANSE). Polar residues predominate over residues 241–253 (PLRNENGVNSPAN). 6 C2H2-type zinc fingers span residues 269–291 (HGCD…KRVH), 297–319 (YKCE…KVVH), 325–347 (YKCN…QRLH), 353–375 (YHCN…LKSH), 381–403 (YQCL…QGVH), and 409–431 (YECN…QETH). The segment at 429–450 (ETHHKEKPFTQSGPIQQQRNHT) is disordered. Residues 437-447 (FTQSGPIQQQR) show a composition bias toward polar residues. The segment at 455 to 477 (YKCSVCGKAFIQKISLIEHEQIH) adopts a C2H2-type 7 zinc-finger fold. Residues 483 to 501 (YKCAEGGKAFIQMSELTEH) form a C2H2-type 8; degenerate zinc finger.

This sequence belongs to the krueppel C2H2-type zinc-finger protein family. Testis specific.

The protein resides in the nucleus. May be involved in transcriptional regulation. The protein is Zinc finger and SCAN domain-containing protein 12 (Zscan12) of Mus musculus (Mouse).